Here is a 490-residue protein sequence, read N- to C-terminus: Inosine-5'-monophosphate dehydrogenase (490 aa).

2 CBS domains span residues 96-154 (MIIN…SKPV) and 158-218 (MTKE…CKDE). Residues Asp-252 and 302 to 304 (GVG) contribute to the NAD(+) site. The K(+) site is built by Gly-304 and Gly-306. Ser-307 is a binding site for IMP. K(+) is bound at residue Cys-309. Cys-309 serves as the catalytic Thioimidate intermediate. Residues 342 to 344 (DGG), 365 to 366 (GN), and 389 to 393 (YRGMG) each bind IMP. Arg-406 serves as the catalytic Proton acceptor. Glu-418 is a binding site for IMP. Glu-472, Ser-473, and His-474 together coordinate K(+).

Belongs to the IMPDH/GMPR family. As to quaternary structure, homotetramer. It depends on K(+) as a cofactor.

The enzyme catalyses IMP + NAD(+) + H2O = XMP + NADH + H(+). The protein operates within purine metabolism; XMP biosynthesis via de novo pathway; XMP from IMP: step 1/1. With respect to regulation, mycophenolic acid (MPA) is a non-competitive inhibitor that prevents formation of the closed enzyme conformation by binding to the same site as the amobile flap. In contrast, mizoribine monophosphate (MZP) is a competitive inhibitor that induces the closed conformation. MPA is a potent inhibitor of mammalian IMPDHs but a poor inhibitor of the bacterial enzymes. MZP is a more potent inhibitor of bacterial IMPDH. In terms of biological role, catalyzes the conversion of inosine 5'-phosphate (IMP) to xanthosine 5'-phosphate (XMP), the first committed and rate-limiting step in the de novo synthesis of guanine nucleotides, and therefore plays an important role in the regulation of cell growth. In Aquifex aeolicus (strain VF5), this protein is Inosine-5'-monophosphate dehydrogenase.